Reading from the N-terminus, the 209-residue chain is Uracil phosphoribosyltransferase (209 aa).

5-phospho-alpha-D-ribose 1-diphosphate is bound by residues Arg79, Arg104, and 131–139 (DPMLATGGS). Uracil-binding positions include Ile194 and 199–201 (GDA). 5-phospho-alpha-D-ribose 1-diphosphate is bound at residue Asp200.

Belongs to the UPRTase family. It depends on Mg(2+) as a cofactor.

It catalyses the reaction UMP + diphosphate = 5-phospho-alpha-D-ribose 1-diphosphate + uracil. It participates in pyrimidine metabolism; UMP biosynthesis via salvage pathway; UMP from uracil: step 1/1. Allosterically activated by GTP. Functionally, catalyzes the conversion of uracil and 5-phospho-alpha-D-ribose 1-diphosphate (PRPP) to UMP and diphosphate. The polypeptide is Uracil phosphoribosyltransferase (Streptococcus sanguinis (strain SK36)).